The chain runs to 425 residues: Elongation factor 1-alpha (425 aa).

The region spanning 5-221 is the tr-type G domain; the sequence is KPHMNLAVIG…NALSEPEKPT (217 aa). Positions 14–21 are G1; sequence GHIDHGKS. Residue 14–21 participates in GTP binding; the sequence is GHIDHGKS. Residue Ser21 coordinates Mg(2+). Positions 70-74 are G2; sequence GITID. The segment at 91–94 is G3; that stretch reads DCPG. GTP-binding positions include 91-95 and 146-149; these read DCPGH and NKMD. The tract at residues 146–149 is G4; it reads NKMD. A G5 region spans residues 185-187; sequence SAF.

Belongs to the TRAFAC class translation factor GTPase superfamily. Classic translation factor GTPase family. EF-Tu/EF-1A subfamily.

The protein resides in the cytoplasm. The enzyme catalyses GTP + H2O = GDP + phosphate + H(+). Its function is as follows. GTP hydrolase that promotes the GTP-dependent binding of aminoacyl-tRNA to the A-site of ribosomes during protein biosynthesis. The sequence is that of Elongation factor 1-alpha from Methanoculleus marisnigri (strain ATCC 35101 / DSM 1498 / JR1).